We begin with the raw amino-acid sequence, 300 residues long: Transcription initiation factor IIB (300 aa).

The TFIIB-type zinc finger occupies 2-34 (NKQKVCPACESAELIYDPERGEIVCAKCGYVIE). Cysteine 7, cysteine 10, cysteine 26, and cysteine 29 together coordinate Zn(2+). Repeat copies occupy residues 114-197 (SELD…ARNL) and 210-291 (DYVN…ELVE).

The protein belongs to the TFIIB family.

In terms of biological role, stabilizes TBP binding to an archaeal box-A promoter. Also responsible for recruiting RNA polymerase II to the pre-initiation complex (DNA-TBP-TFIIB). The protein is Transcription initiation factor IIB of Pyrococcus furiosus (strain ATCC 43587 / DSM 3638 / JCM 8422 / Vc1).